The sequence spans 556 residues: uncharacterized protein (556 aa).

5 disordered regions span residues 1 to 40 (MSNS…TNEN), 80 to 243 (NTTQ…KQSW), 278 to 324 (YDSD…SSLP), 363 to 391 (RTKQ…KFVD), and 422 to 525 (DSKQ…ENSA). Positions 7-25 (NNNNNTNNNNNNNNNNNGN) are enriched in low complexity. Acidic residues predominate over residues 30 to 40 (EEPDDDSTNEN). 2 stretches are compositionally biased toward low complexity: residues 80–133 (NTTQ…GTRS) and 164–181 (NDNN…NDSN). Over residues 182 to 192 (IVDDDEDEEEF) the composition is skewed to acidic residues. A compositionally biased stretch (low complexity) spans 207 to 226 (STSSPSSTSSPIVSPQTQTS). Residues 227–243 (KLESSMDVSPSSGKQSW) are compositionally biased toward polar residues. Low complexity-rich tracts occupy residues 292-322 (NNSS…NSSS), 369-388 (KVQQ…NNNK), and 425-525 (QQNV…ENSA). A helical transmembrane segment spans residues 528-548 (GSFIKNAVIFIFILLLMVVGF).

The protein localises to the membrane. This is an uncharacterized protein from Dictyostelium discoideum (Social amoeba).